The chain runs to 156 residues: Ribosomal RNA large subunit methyltransferase H (156 aa).

Residues L73, G104, and 123–128 (LSPLTL) contribute to the S-adenosyl-L-methionine site.

Belongs to the RNA methyltransferase RlmH family. In terms of assembly, homodimer.

The protein resides in the cytoplasm. It carries out the reaction pseudouridine(1915) in 23S rRNA + S-adenosyl-L-methionine = N(3)-methylpseudouridine(1915) in 23S rRNA + S-adenosyl-L-homocysteine + H(+). Specifically methylates the pseudouridine at position 1915 (m3Psi1915) in 23S rRNA. This is Ribosomal RNA large subunit methyltransferase H from Aliivibrio fischeri (strain ATCC 700601 / ES114) (Vibrio fischeri).